The primary structure comprises 860 residues: Leucine--tRNA ligase (860 aa).

The short motif at 42-52 is the 'HIGH' region element; the sequence is PYPSGRLHMGH. A 'KMSKS' region motif is present at residues 619 to 623; the sequence is KMSKS. Lysine 622 serves as a coordination point for ATP.

The protein belongs to the class-I aminoacyl-tRNA synthetase family.

Its subcellular location is the cytoplasm. The enzyme catalyses tRNA(Leu) + L-leucine + ATP = L-leucyl-tRNA(Leu) + AMP + diphosphate. In Pectobacterium atrosepticum (strain SCRI 1043 / ATCC BAA-672) (Erwinia carotovora subsp. atroseptica), this protein is Leucine--tRNA ligase.